Consider the following 273-residue polypeptide: Shikimate dehydrogenase (NADP(+)) (273 aa).

Residues 14–16 (SKS) and T61 each bind shikimate. K65 (proton acceptor) is an active-site residue. Residue E77 coordinates NADP(+). Residues N86 and D102 each coordinate shikimate. Residues 126–130 (GAGGA), 150–155 (NRTYEK), and M213 each bind NADP(+). Y215 provides a ligand contact to shikimate. G237 lines the NADP(+) pocket.

Belongs to the shikimate dehydrogenase family. In terms of assembly, homodimer.

The enzyme catalyses shikimate + NADP(+) = 3-dehydroshikimate + NADPH + H(+). The protein operates within metabolic intermediate biosynthesis; chorismate biosynthesis; chorismate from D-erythrose 4-phosphate and phosphoenolpyruvate: step 4/7. In terms of biological role, involved in the biosynthesis of the chorismate, which leads to the biosynthesis of aromatic amino acids. Catalyzes the reversible NADPH linked reduction of 3-dehydroshikimate (DHSA) to yield shikimate (SA). This chain is Shikimate dehydrogenase (NADP(+)), found in Aliivibrio fischeri (strain MJ11) (Vibrio fischeri).